The sequence spans 388 residues: Putative 8-amino-7-oxononanoate synthase (388 aa).

Arg-18 contributes to the substrate binding site. A pyridoxal 5'-phosphate-binding site is contributed by 105-106 (GY). His-130 is a binding site for substrate. Residues Ser-176, 201–204 (DDAH), and 232–235 (TLSK) each bind pyridoxal 5'-phosphate. At Lys-235 the chain carries N6-(pyridoxal phosphate)lysine. Residue Thr-349 participates in substrate binding.

Belongs to the class-II pyridoxal-phosphate-dependent aminotransferase family. BioF subfamily. Homodimer. The cofactor is pyridoxal 5'-phosphate.

The enzyme catalyses 6-carboxyhexanoyl-[ACP] + L-alanine + H(+) = (8S)-8-amino-7-oxononanoate + holo-[ACP] + CO2. It participates in cofactor biosynthesis; biotin biosynthesis. Catalyzes the decarboxylative condensation of pimeloyl-[acyl-carrier protein] and L-alanine to produce 8-amino-7-oxononanoate (AON), [acyl-carrier protein], and carbon dioxide. This chain is Putative 8-amino-7-oxononanoate synthase (bioF), found in Acetivibrio thermocellus (strain ATCC 27405 / DSM 1237 / JCM 9322 / NBRC 103400 / NCIMB 10682 / NRRL B-4536 / VPI 7372) (Clostridium thermocellum).